Consider the following 137-residue polypeptide: Ribosome-binding factor A (137 aa).

The disordered stretch occupies residues 112–137; the sequence is KKDEVKEDESHEDESTDHTEETNEEP. A compositionally biased stretch (basic and acidic residues) spans 127–137; the sequence is TDHTEETNEEP.

This sequence belongs to the RbfA family. As to quaternary structure, monomer. Binds 30S ribosomal subunits, but not 50S ribosomal subunits or 70S ribosomes.

It localises to the cytoplasm. Its function is as follows. One of several proteins that assist in the late maturation steps of the functional core of the 30S ribosomal subunit. Associates with free 30S ribosomal subunits (but not with 30S subunits that are part of 70S ribosomes or polysomes). Required for efficient processing of 16S rRNA. May interact with the 5'-terminal helix region of 16S rRNA. The sequence is that of Ribosome-binding factor A from Coprothermobacter proteolyticus (strain ATCC 35245 / DSM 5265 / OCM 4 / BT).